The sequence spans 263 residues: Sepiapterin reductase (263 aa).

Residues 18–24 (GASRGFG), 46–47 (RT), and 73–74 (DL) contribute to the NADP(+) site. Residues 160 to 161 (SL) and Tyr-173 each bind substrate. Position 177 (Lys-177) interacts with NADP(+). Gly-202 serves as a coordination point for substrate. NADP(+) is bound at residue 204 to 209 (LDTDMH). A substrate-binding site is contributed by Asp-260.

Belongs to the sepiapterin reductase family. In terms of assembly, homodimer.

Its subcellular location is the cytoplasm. The catalysed reaction is L-erythro-7,8-dihydrobiopterin + NADP(+) = L-sepiapterin + NADPH + H(+). The enzyme catalyses (6R)-L-erythro-5,6,7,8-tetrahydrobiopterin + 2 NADP(+) = 6-pyruvoyl-5,6,7,8-tetrahydropterin + 2 NADPH + 2 H(+). In terms of biological role, catalyzes the final one or two reductions in tetra-hydrobiopterin biosynthesis to form 5,6,7,8-tetrahydrobiopterin. This chain is Sepiapterin reductase (spr), found in Xenopus laevis (African clawed frog).